The chain runs to 305 residues: Ribosomal protein L11 methyltransferase (305 aa).

S-adenosyl-L-methionine is bound by residues threonine 152, glycine 173, aspartate 195, and asparagine 237.

This sequence belongs to the methyltransferase superfamily. PrmA family.

Its subcellular location is the cytoplasm. The enzyme catalyses L-lysyl-[protein] + 3 S-adenosyl-L-methionine = N(6),N(6),N(6)-trimethyl-L-lysyl-[protein] + 3 S-adenosyl-L-homocysteine + 3 H(+). In terms of biological role, methylates ribosomal protein L11. This chain is Ribosomal protein L11 methyltransferase, found in Hamiltonella defensa subsp. Acyrthosiphon pisum (strain 5AT).